Reading from the N-terminus, the 399-residue chain is Succinate--CoA ligase [ADP-forming] subunit beta (399 aa).

In terms of domain architecture, ATP-grasp spans 9–254; that stretch reads KELLAKYGVG…ETEEDPAEIE (246 aa). Residues Lys46, 53-55, Val112, and Glu117 each bind ATP; that span reads GRG. Positions 209 and 223 each coordinate Mg(2+). Substrate is bound by residues Asn274 and 331 to 333; that span reads GIM.

It belongs to the succinate/malate CoA ligase beta subunit family. In terms of assembly, heterotetramer of two alpha and two beta subunits. It depends on Mg(2+) as a cofactor.

It catalyses the reaction succinate + ATP + CoA = succinyl-CoA + ADP + phosphate. The enzyme catalyses GTP + succinate + CoA = succinyl-CoA + GDP + phosphate. Its pathway is carbohydrate metabolism; tricarboxylic acid cycle; succinate from succinyl-CoA (ligase route): step 1/1. Its function is as follows. Succinyl-CoA synthetase functions in the citric acid cycle (TCA), coupling the hydrolysis of succinyl-CoA to the synthesis of either ATP or GTP and thus represents the only step of substrate-level phosphorylation in the TCA. The beta subunit provides nucleotide specificity of the enzyme and binds the substrate succinate, while the binding sites for coenzyme A and phosphate are found in the alpha subunit. The protein is Succinate--CoA ligase [ADP-forming] subunit beta of Novosphingobium aromaticivorans (strain ATCC 700278 / DSM 12444 / CCUG 56034 / CIP 105152 / NBRC 16084 / F199).